A 124-amino-acid chain; its full sequence is Small ribosomal subunit protein uS12 (124 aa).

The disordered stretch occupies residues 1–32; sequence MPTIQQLVRKGRQDKVEKTKTPALKGSPQRRG. A compositionally biased stretch (basic and acidic residues) spans 11 to 20; that stretch reads GRQDKVEKTK. Asp89 is modified (3-methylthioaspartic acid).

It belongs to the universal ribosomal protein uS12 family. In terms of assembly, part of the 30S ribosomal subunit. Contacts proteins S8 and S17. May interact with IF1 in the 30S initiation complex.

With S4 and S5 plays an important role in translational accuracy. In terms of biological role, interacts with and stabilizes bases of the 16S rRNA that are involved in tRNA selection in the A site and with the mRNA backbone. Located at the interface of the 30S and 50S subunits, it traverses the body of the 30S subunit contacting proteins on the other side and probably holding the rRNA structure together. The combined cluster of proteins S8, S12 and S17 appears to hold together the shoulder and platform of the 30S subunit. The protein is Small ribosomal subunit protein uS12 of Frankia alni (strain DSM 45986 / CECT 9034 / ACN14a).